Reading from the N-terminus, the 186-residue chain is Dihydrofolate reductase (186 aa).

Residues 3–183 (KFSLIVAVCA…IQYQYRIYEK (181 aa)) form the DHFR domain. Residues Ala-9 and 15–21 (GIGIKGD) contribute to the NADP(+) site. Position 29–34 (29–34 (ELKYFS)) interacts with substrate. Residue 53-55 (RKT) coordinates NADP(+). Substrate is bound at residue Arg-69. NADP(+) contacts are provided by residues 75–77 (TRD) and 116–123 (GGNAVYKE).

This sequence belongs to the dihydrofolate reductase family.

The enzyme catalyses (6S)-5,6,7,8-tetrahydrofolate + NADP(+) = 7,8-dihydrofolate + NADPH + H(+). Its pathway is cofactor biosynthesis; tetrahydrofolate biosynthesis; 5,6,7,8-tetrahydrofolate from 7,8-dihydrofolate: step 1/1. In terms of biological role, key enzyme in folate metabolism. Catalyzes an essential reaction for de novo glycine and purine synthesis, and for DNA precursor synthesis. The polypeptide is Dihydrofolate reductase (DHFR) (Aedes albopictus (Asian tiger mosquito)).